Reading from the N-terminus, the 160-residue chain is Large ribosomal subunit protein uL15 (160 aa).

Residues Met1–Gly11 show a composition bias toward basic and acidic residues. Residues Met1–Lys39 are disordered. The segment covering Arg21–Val35 has biased composition (gly residues).

This sequence belongs to the universal ribosomal protein uL15 family. Part of the 50S ribosomal subunit.

Functionally, binds to the 23S rRNA. The polypeptide is Large ribosomal subunit protein uL15 (Granulibacter bethesdensis (strain ATCC BAA-1260 / CGDNIH1)).